The sequence spans 152 residues: Deoxyuridine 5'-triphosphate nucleotidohydrolase (152 aa).

Substrate is bound by residues 71–73 (RSG), Asn-84, 88–90 (LID), and Met-98.

This sequence belongs to the dUTPase family. It depends on Mg(2+) as a cofactor.

The enzyme catalyses dUTP + H2O = dUMP + diphosphate + H(+). Its pathway is pyrimidine metabolism; dUMP biosynthesis; dUMP from dCTP (dUTP route): step 2/2. Functionally, this enzyme is involved in nucleotide metabolism: it produces dUMP, the immediate precursor of thymidine nucleotides and it decreases the intracellular concentration of dUTP so that uracil cannot be incorporated into DNA. This Coxiella burnetii (strain RSA 331 / Henzerling II) protein is Deoxyuridine 5'-triphosphate nucleotidohydrolase.